The chain runs to 176 residues: Ribosome maturation factor RimM (176 aa).

The PRC barrel domain occupies 95-169; that stretch reads EDEVYLFELE…TARIAPPPGL (75 aa).

Belongs to the RimM family. Binds ribosomal protein uS19.

It localises to the cytoplasm. In terms of biological role, an accessory protein needed during the final step in the assembly of 30S ribosomal subunit, possibly for assembly of the head region. Essential for efficient processing of 16S rRNA. May be needed both before and after RbfA during the maturation of 16S rRNA. It has affinity for free ribosomal 30S subunits but not for 70S ribosomes. The chain is Ribosome maturation factor RimM from Nitratidesulfovibrio vulgaris (strain ATCC 29579 / DSM 644 / CCUG 34227 / NCIMB 8303 / VKM B-1760 / Hildenborough) (Desulfovibrio vulgaris).